The primary structure comprises 699 residues: tRNA(Met) cytidine acetyltransferase TmcA (699 aa).

ATP is bound by residues Q179, 201 to 210 (GRGKSTLAGM), and R323. Residues 359–543 (IEIPLYEQRD…SGCYTAMALL (185 aa)) form the N-acetyltransferase domain. Acetyl-CoA contacts are provided by residues 471 to 473 (VAV), E511, and R518.

Belongs to the RNA cytidine acetyltransferase family. TmcA subfamily.

It is found in the cytoplasm. It carries out the reaction cytidine(34) in elongator tRNA(Met) + acetyl-CoA + ATP + H2O = N(4)-acetylcytidine(34) in elongator tRNA(Met) + ADP + phosphate + CoA + H(+). In terms of biological role, catalyzes the formation of N(4)-acetylcytidine (ac(4)C) at the wobble position of tRNA(Met), by using acetyl-CoA as an acetyl donor and ATP (or GTP). The protein is tRNA(Met) cytidine acetyltransferase TmcA of Yersinia pestis (strain D106004).